A 337-amino-acid polypeptide reads, in one-letter code: Holliday junction branch migration complex subunit RuvB (337 aa).

The large ATPase domain (RuvB-L) stretch occupies residues 1–182 (MEDRMVSASY…FGVLSAMEFY (182 aa)). Leu21, Arg22, Gly63, Lys66, Thr67, Thr68, Arg172, Tyr182, and Arg219 together coordinate ATP. Thr67 contacts Mg(2+). The interval 183 to 253 (NEDELKEIIL…IAKNALSLLE (71 aa)) is small ATPAse domain (RuvB-S). Positions 256 to 337 (GEGFDKIDNK…REFKEQTKLT (82 aa)) are head domain (RuvB-H). Arg311 and Arg316 together coordinate DNA.

Belongs to the RuvB family. As to quaternary structure, homohexamer. Forms an RuvA(8)-RuvB(12)-Holliday junction (HJ) complex. HJ DNA is sandwiched between 2 RuvA tetramers; dsDNA enters through RuvA and exits via RuvB. An RuvB hexamer assembles on each DNA strand where it exits the tetramer. Each RuvB hexamer is contacted by two RuvA subunits (via domain III) on 2 adjacent RuvB subunits; this complex drives branch migration. In the full resolvosome a probable DNA-RuvA(4)-RuvB(12)-RuvC(2) complex forms which resolves the HJ.

It is found in the cytoplasm. The enzyme catalyses ATP + H2O = ADP + phosphate + H(+). The RuvA-RuvB-RuvC complex processes Holliday junction (HJ) DNA during genetic recombination and DNA repair, while the RuvA-RuvB complex plays an important role in the rescue of blocked DNA replication forks via replication fork reversal (RFR). RuvA specifically binds to HJ cruciform DNA, conferring on it an open structure. The RuvB hexamer acts as an ATP-dependent pump, pulling dsDNA into and through the RuvAB complex. RuvB forms 2 homohexamers on either side of HJ DNA bound by 1 or 2 RuvA tetramers; 4 subunits per hexamer contact DNA at a time. Coordinated motions by a converter formed by DNA-disengaged RuvB subunits stimulates ATP hydrolysis and nucleotide exchange. Immobilization of the converter enables RuvB to convert the ATP-contained energy into a lever motion, pulling 2 nucleotides of DNA out of the RuvA tetramer per ATP hydrolyzed, thus driving DNA branch migration. The RuvB motors rotate together with the DNA substrate, which together with the progressing nucleotide cycle form the mechanistic basis for DNA recombination by continuous HJ branch migration. Branch migration allows RuvC to scan DNA until it finds its consensus sequence, where it cleaves and resolves cruciform DNA. In Clostridium novyi (strain NT), this protein is Holliday junction branch migration complex subunit RuvB.